The following is a 952-amino-acid chain: Bifunctional ent-kaurene synthase (952 aa).

A DXDD B-type cyclization motif motif is present at residues 328–331 (DVDD). Residues D668, E672, N848, D849, S852, and D856 each coordinate Mg(2+). Residues 668-672 (DEYME) carry the DEXXE A-type cyclization motif motif.

The protein belongs to the terpene synthase family. Mg(2+) serves as cofactor.

It carries out the reaction ent-copalyl diphosphate = ent-kaur-16-ene + diphosphate. The catalysed reaction is (2E,6E,10E)-geranylgeranyl diphosphate = ent-copalyl diphosphate. It functions in the pathway plant hormone biosynthesis; gibberellin biosynthesis. In terms of biological role, bifunctional ent-kaurene synthase; part of the gene cluster that mediates the biosynthesis of gibberellins (GAs), diterpenoids that may provide a selective advantage during infection of the preferred host plant, rice. Gibberellins (GAs) are diterpenoids and are synthesized via the mevalonate pathway. Biosynthesis of the major metabolite GA3 (gibberellic acid) from geranylgeranyl diphosphate (GGPP) requires 13 steps. The GGPP produced by the geranylgeranyl diphosphate synthase GGS2 is converted to ent-kaurene via ent-copalyldiphosphate in a two-step cyclization reaction performed by the bifunctional ent-copalyl diphosphate synthase/ent-kaurene synthase enzyme (CPS/KS). Ent-Kaurene is metabolized to GAs by a series of oxidation reactions catalyzed by cytochrome P450 monooxygenases. Cytochrome P450 monooxygenase P450-4 is an ent-kaurene oxidase that catalyzes the three oxidation steps between ent-kaurene and ent-kaurenoic acid. The highly multifunctional cytochrome P450 monooxygenase P450-1 then catalyzes four steps involving oxidation at two carbon atoms, in the main pathway from ent-kaurenoic acid to GA14 via GA12-aldehyde as well as producing kaurenolides and fujenoic acids as by-products. The cytochrome P450 monooxygenase P450-2 then converts GA14 to GA4 by removal of C-20. GA4 is further converted to GA7 by the GA4 desaturase DES via 1,2-desaturation before cytochrome P450 monooxygenase P450-3, a 13-hydroxylase, hydroxylates GA7 to GA3, the final product of the GA-biosynthetic pathway. The chain is Bifunctional ent-kaurene synthase from Gibberella fujikuroi (strain CBS 195.34 / IMI 58289 / NRRL A-6831) (Bakanae and foot rot disease fungus).